The sequence spans 663 residues: MNFRYNHTPFGYKRRQTREVKVGDVKIGGNNPIVIQSMINSDTTDTKGTVKQILELERTGCEIVRFTVPSQVDADNLPSIRQELKKAGSKIPLVADIHFTPSVAMKAVEYVEKVRINPGNFADKKKFAVRDYTDSEYDEELERISATFSPLVLRCKELGVSMRIGTNHGSLSDRIMNRYGDTPQGMVESALEFIRIAESLNYYDIVVSMKASNPQVMVQAYRMLASRFNELKMDYPLHLGVTEAGDGKDGRIKSAIGIGSLLEDGLGDTIRVSLTEDPVLEIPVARLLAEKFNKRIVKPEPVRGYSEFRNPFTYERFYSSEIKVGTFEAGENHPVRVETVLPFENSNSFLANIAKLYQYGKSFSIEPESILIDSPSPDQLKEISEAAAALSIPVGILLGKNVSLNEKLQNELRGFPKVVFDPFLQFQDGKKMLSFLQERQNAGLYTEIHTSGAKIESFKGLPETLSEIGIKNVLFSIESKEILYDYRKLGSILSQHEFPILLHGSFSNPEEALYDSAIGIGGLLIDGIGDLIRIKTPKMKDIEEIFQLSYDLLQGTRLRLTKTEYISCPSCGRTLFNLQETTARIKSRTGHLKGVKIAVMGCIVNGPGEMADADFGYVGAGPGKVHLYRGKEIVMKNVPSEVADEKLVELIKKHGLWQDVTNV.

[4Fe-4S] cluster contacts are provided by cysteine 568, cysteine 571, cysteine 602, and glutamate 609.

The protein belongs to the IspG family. [4Fe-4S] cluster is required as a cofactor.

The catalysed reaction is (2E)-4-hydroxy-3-methylbut-2-enyl diphosphate + oxidized [flavodoxin] + H2O + 2 H(+) = 2-C-methyl-D-erythritol 2,4-cyclic diphosphate + reduced [flavodoxin]. Its pathway is isoprenoid biosynthesis; isopentenyl diphosphate biosynthesis via DXP pathway; isopentenyl diphosphate from 1-deoxy-D-xylulose 5-phosphate: step 5/6. Functionally, converts 2C-methyl-D-erythritol 2,4-cyclodiphosphate (ME-2,4cPP) into 1-hydroxy-2-methyl-2-(E)-butenyl 4-diphosphate. The polypeptide is 4-hydroxy-3-methylbut-2-en-1-yl diphosphate synthase (flavodoxin) (Leptospira borgpetersenii serovar Hardjo-bovis (strain JB197)).